We begin with the raw amino-acid sequence, 107 residues long: ATP-dependent Clp protease adapter protein ClpS (107 aa).

This sequence belongs to the ClpS family. In terms of assembly, binds to the N-terminal domain of the chaperone ClpA.

Its function is as follows. Involved in the modulation of the specificity of the ClpAP-mediated ATP-dependent protein degradation. The chain is ATP-dependent Clp protease adapter protein ClpS from Syntrophus aciditrophicus (strain SB).